Reading from the N-terminus, the 125-residue chain is Large ribosomal subunit protein eL32 (125 aa).

The protein belongs to the eukaryotic ribosomal protein eL32 family.

This Sulfolobus acidocaldarius (strain ATCC 33909 / DSM 639 / JCM 8929 / NBRC 15157 / NCIMB 11770) protein is Large ribosomal subunit protein eL32 (rpl32e).